The chain runs to 30 residues: Fibrinogen (30 aa).

In terms of assembly, homodimer. As to expression, secreted into the hemolymph.

The protein resides in the secreted. The protein localises to the extracellular space. Its function is as follows. Clotting protein. In Panulirus interruptus (California spiny lobster), this protein is Fibrinogen.